A 98-amino-acid polypeptide reads, in one-letter code: NADH-ubiquinone oxidoreductase chain 4L (98 aa).

3 helical membrane-spanning segments follow: residues 1 to 21, 29 to 49, and 61 to 81; these read MSMV…GLLM, SLLC…MTIL, and IILL…LVMV.

Belongs to the complex I subunit 4L family. Core subunit of respiratory chain NADH dehydrogenase (Complex I) which is composed of 45 different subunits.

Its subcellular location is the mitochondrion inner membrane. The enzyme catalyses a ubiquinone + NADH + 5 H(+)(in) = a ubiquinol + NAD(+) + 4 H(+)(out). Its function is as follows. Core subunit of the mitochondrial membrane respiratory chain NADH dehydrogenase (Complex I) which catalyzes electron transfer from NADH through the respiratory chain, using ubiquinone as an electron acceptor. Part of the enzyme membrane arm which is embedded in the lipid bilayer and involved in proton translocation. The sequence is that of NADH-ubiquinone oxidoreductase chain 4L (MT-ND4L) from Otaria byronia (South American sea lion).